Consider the following 165-residue polypeptide: Minor capsid protein VP2 (165 aa).

It belongs to the sapovirus VP2 family. Homooligomer. The portal-like structure consists in 12 copies of VP2. Interacts with capsid protein VP1.

It localises to the virion. It is found in the host cytoplasm. In terms of biological role, minor structural protein that forms a portal-like structure at a unique three-fold axis of symmetry, following binding to the host receptor. The channel formed by VP2 may allow the delivery of the viral genome through the host endosomal membrane. The polypeptide is Minor capsid protein VP2 (Homo sapiens (Human)).